Reading from the N-terminus, the 384-residue chain is Tryptophan--tRNA ligase (384 aa).

Positions 81–89 (PSGPMHIGH) match the 'HIGH' region motif. The short motif at 252–256 (KMSAS) is the 'KMSKS' region element.

It belongs to the class-I aminoacyl-tRNA synthetase family.

Its subcellular location is the cytoplasm. It catalyses the reaction tRNA(Trp) + L-tryptophan + ATP = L-tryptophyl-tRNA(Trp) + AMP + diphosphate + H(+). The sequence is that of Tryptophan--tRNA ligase from Thermococcus onnurineus (strain NA1).